The primary structure comprises 516 residues: Monocarboxylate transporter 12 (516 aa).

Over 1 to 50 the chain is Cytoplasmic; that stretch reads MPSGSHWTANSSKIITWLLEQPGKEEKRKTMAKVNRARSTSPPDGGWGWM. Transmembrane regions (helical) follow at residues 51–73, 88–108, 116–136, 145–165, 178–198, 207–227, 283–303, 319–339, 350–370, 377–397, 410–430, and 440–460; these read IVAG…SIFF, AWIH…GSVV, VGIM…SFAT, LGVL…AMVG, IAMS…QLLI, LLIL…MRPI, FVVL…LFVY, AFLM…FGWL, YVCY…LPML, VPFS…IPVV, ALGV…PIAG, and TAAF…LGFA. The Cytoplasmic portion of the chain corresponds to 461-516; the sequence is RLIKRMRKTQLQFIAKESDPKLQLWTNGSVAYSVARELDQKHGEPVATAVPGYSLT.

Belongs to the major facilitator superfamily. Monocarboxylate porter (TC 2.A.1.13) family. As to quaternary structure, interacts with isoform 2 of BSG; this interaction is required for its localization to the plasma membrane. Most highly expressed in kidney, followed by retina, lung, heart and testis. Very weakly expressed in brain and liver. Also detected in lens.

Its subcellular location is the cell membrane. The protein resides in the basolateral cell membrane. The enzyme catalyses creatine(in) = creatine(out). The catalysed reaction is guanidinoacetate(in) = guanidinoacetate(out). Its activity is regulated as follows. Creatine uptake is inhibited by carbonyl cyanide 3-chlorophenylhydrazone (CCCP) and by valinomycin. Its function is as follows. Functions as a transporter for creatine and as well for its precursor guanidinoacetate. Transport of creatine and GAA is independent of resting membrane potential and extracellular Na(+), Cl(-), or pH. Contributes to the process of creatine biosynthesis and distribution. This is Monocarboxylate transporter 12 from Homo sapiens (Human).